The sequence spans 989 residues: Phosphoenolpyruvate carboxylase (989 aa).

Residues His175 and Lys630 contribute to the active site.

The protein belongs to the PEPCase type 1 family. Requires Mg(2+) as cofactor.

The enzyme catalyses oxaloacetate + phosphate = phosphoenolpyruvate + hydrogencarbonate. Functionally, forms oxaloacetate, a four-carbon dicarboxylic acid source for the tricarboxylic acid cycle. The sequence is that of Phosphoenolpyruvate carboxylase from Prochlorococcus marinus subsp. pastoris (strain CCMP1986 / NIES-2087 / MED4).